The sequence spans 361 residues: Holliday junction branch migration complex subunit RuvB (361 aa).

Residues 1–21 (MHKDEDQRLLGAVPLPNDPDR) form a disordered region. A large ATPase domain (RuvB-L) region spans residues 1 to 184 (MHKDEDQRLL…FGIPIRLNFY (184 aa)). ATP-binding positions include leucine 23, arginine 24, glycine 65, lysine 68, threonine 69, threonine 70, 131-133 (EDY), arginine 174, tyrosine 184, and arginine 221. Threonine 69 serves as a coordination point for Mg(2+). A small ATPAse domain (RuvB-S) region spans residues 185-255 (TIEELEYIVQ…IADEALSRLE (71 aa)). The interval 258–361 (HLGLDPLDRR…QTVLWDEADD (104 aa)) is head domain (RuvB-H). Residues arginine 294, arginine 313, and arginine 318 each contribute to the DNA site.

It belongs to the RuvB family. Homohexamer. Forms an RuvA(8)-RuvB(12)-Holliday junction (HJ) complex. HJ DNA is sandwiched between 2 RuvA tetramers; dsDNA enters through RuvA and exits via RuvB. An RuvB hexamer assembles on each DNA strand where it exits the tetramer. Each RuvB hexamer is contacted by two RuvA subunits (via domain III) on 2 adjacent RuvB subunits; this complex drives branch migration. In the full resolvosome a probable DNA-RuvA(4)-RuvB(12)-RuvC(2) complex forms which resolves the HJ.

It is found in the cytoplasm. The enzyme catalyses ATP + H2O = ADP + phosphate + H(+). In terms of biological role, the RuvA-RuvB-RuvC complex processes Holliday junction (HJ) DNA during genetic recombination and DNA repair, while the RuvA-RuvB complex plays an important role in the rescue of blocked DNA replication forks via replication fork reversal (RFR). RuvA specifically binds to HJ cruciform DNA, conferring on it an open structure. The RuvB hexamer acts as an ATP-dependent pump, pulling dsDNA into and through the RuvAB complex. RuvB forms 2 homohexamers on either side of HJ DNA bound by 1 or 2 RuvA tetramers; 4 subunits per hexamer contact DNA at a time. Coordinated motions by a converter formed by DNA-disengaged RuvB subunits stimulates ATP hydrolysis and nucleotide exchange. Immobilization of the converter enables RuvB to convert the ATP-contained energy into a lever motion, pulling 2 nucleotides of DNA out of the RuvA tetramer per ATP hydrolyzed, thus driving DNA branch migration. The RuvB motors rotate together with the DNA substrate, which together with the progressing nucleotide cycle form the mechanistic basis for DNA recombination by continuous HJ branch migration. Branch migration allows RuvC to scan DNA until it finds its consensus sequence, where it cleaves and resolves cruciform DNA. The chain is Holliday junction branch migration complex subunit RuvB from Bartonella henselae (strain ATCC 49882 / DSM 28221 / CCUG 30454 / Houston 1) (Rochalimaea henselae).